Reading from the N-terminus, the 276-residue chain is MKTSKTKPPKSVLIAGPCVIESLENLRSIAIKLQPLANNERLDFYFKASFDKANRTSLESYRGPGLEKGLEMLQIIKEEFGYKILTDVHESYQASVAAKVADILQIPAFLCRQTDLIVEVSQTNAIINIKKGQFMNPKDMQYSVLKALKTRDSSIQSPTYETALKNGVWLCERGSSFGYGNLVVDMRSLTIMREFAPVIFDATHSVQMPGGANGKSSGDSSFAPILARAAAAVGIDGLFAETHVDPKNALSDGANMLKPDELERLVTDMLKIQNLF.

The protein belongs to the KdsA family.

The protein resides in the cytoplasm. The catalysed reaction is D-arabinose 5-phosphate + phosphoenolpyruvate + H2O = 3-deoxy-alpha-D-manno-2-octulosonate-8-phosphate + phosphate. Its pathway is carbohydrate biosynthesis; 3-deoxy-D-manno-octulosonate biosynthesis; 3-deoxy-D-manno-octulosonate from D-ribulose 5-phosphate: step 2/3. It functions in the pathway bacterial outer membrane biogenesis; lipopolysaccharide biosynthesis. This chain is 2-dehydro-3-deoxyphosphooctonate aldolase, found in Helicobacter pylori (strain HPAG1).